The chain runs to 823 residues: Protein ROOT HAIR DEFECTIVE 3 homolog 2 (823 aa).

Residues 1-688 (MEVPISGGGG…EAHRRSNNWL (688 aa)) lie on the Cytoplasmic side of the membrane. The GB1/RHD3-type G domain maps to 45–260 (GLSYAVVSIV…IAPGGLAADR (216 aa)). 55–62 (GPQGSGKS) is a GTP binding site. The stretch at 226 to 246 (LSSYEEKENLFKEQVGQLRQR) forms a coiled coil. Residues 689-709 (PPAWTVLLLAILGYNEFIFLL) traverse the membrane as a helical segment. Residues 710–712 (RNP) lie on the Lumenal side of the membrane. A helical transmembrane segment spans residues 713-733 (LYLLGLFVAFVVSYAAWLQYD). The Cytoplasmic portion of the chain corresponds to 734-823 (ITAYFRHGTL…SVGSNSDDES (90 aa)). The tract at residues 770–823 (NQKSSSHPPRHRPPLHPQSFRNQAQQQSQAQVQYQAPSSLSSSSSVGSNSDDES) is disordered. The span at 786–823 (PQSFRNQAQQQSQAQVQYQAPSSLSSSSSVGSNSDDES) shows a compositional bias: low complexity.

This sequence belongs to the TRAFAC class dynamin-like GTPase superfamily. GB1/RHD3 GTPase family. RHD3 subfamily.

It localises to the endoplasmic reticulum membrane. In terms of biological role, probable GTP-binding protein that may be involved in cell development. The chain is Protein ROOT HAIR DEFECTIVE 3 homolog 2 from Oryza sativa subsp. japonica (Rice).